A 177-amino-acid chain; its full sequence is Adenine phosphoribosyltransferase (177 aa).

It belongs to the purine/pyrimidine phosphoribosyltransferase family. Homodimer.

It localises to the cytoplasm. The catalysed reaction is AMP + diphosphate = 5-phospho-alpha-D-ribose 1-diphosphate + adenine. It participates in purine metabolism; AMP biosynthesis via salvage pathway; AMP from adenine: step 1/1. In terms of biological role, catalyzes a salvage reaction resulting in the formation of AMP, that is energically less costly than de novo synthesis. The polypeptide is Adenine phosphoribosyltransferase (Anaeromyxobacter sp. (strain Fw109-5)).